A 307-amino-acid chain; its full sequence is Holliday junction branch migration complex subunit RuvB (307 aa).

The large ATPase domain (RuvB-L) stretch occupies residues 1-167; the sequence is MKLQIKPPNT…FGVILNINYY (167 aa). ATP contacts are provided by I5, G48, K51, T52, T53, R157, Y167, and R204. Residue T52 coordinates Mg(2+). The segment at 168–233 is small ATPAse domain (RuvB-S); sequence SNAEIEKMVS…DLEGLFKNLM (66 aa). Residues 236–307 form a head domain (RuvB-H) region; that stretch reads KNGLQSIDVQ…NSGREYLVNF (72 aa). Residues R270, K289, and R294 each coordinate DNA.

This sequence belongs to the RuvB family. As to quaternary structure, homohexamer. Forms an RuvA(8)-RuvB(12)-Holliday junction (HJ) complex. HJ DNA is sandwiched between 2 RuvA tetramers; dsDNA enters through RuvA and exits via RuvB. An RuvB hexamer assembles on each DNA strand where it exits the tetramer. Each RuvB hexamer is contacted by two RuvA subunits (via domain III) on 2 adjacent RuvB subunits; this complex drives branch migration. In the full resolvosome a probable DNA-RuvA(4)-RuvB(12)-RuvC(2) complex forms which resolves the HJ.

It localises to the cytoplasm. The catalysed reaction is ATP + H2O = ADP + phosphate + H(+). Functionally, the RuvA-RuvB-RuvC complex processes Holliday junction (HJ) DNA during genetic recombination and DNA repair, while the RuvA-RuvB complex plays an important role in the rescue of blocked DNA replication forks via replication fork reversal (RFR). RuvA specifically binds to HJ cruciform DNA, conferring on it an open structure. The RuvB hexamer acts as an ATP-dependent pump, pulling dsDNA into and through the RuvAB complex. RuvB forms 2 homohexamers on either side of HJ DNA bound by 1 or 2 RuvA tetramers; 4 subunits per hexamer contact DNA at a time. Coordinated motions by a converter formed by DNA-disengaged RuvB subunits stimulates ATP hydrolysis and nucleotide exchange. Immobilization of the converter enables RuvB to convert the ATP-contained energy into a lever motion, pulling 2 nucleotides of DNA out of the RuvA tetramer per ATP hydrolyzed, thus driving DNA branch migration. The RuvB motors rotate together with the DNA substrate, which together with the progressing nucleotide cycle form the mechanistic basis for DNA recombination by continuous HJ branch migration. Branch migration allows RuvC to scan DNA until it finds its consensus sequence, where it cleaves and resolves cruciform DNA. The chain is Holliday junction branch migration complex subunit RuvB from Mycoplasma genitalium (strain ATCC 33530 / DSM 19775 / NCTC 10195 / G37) (Mycoplasmoides genitalium).